The following is a 321-amino-acid chain: Ribosomal RNA small subunit methyltransferase H (321 aa).

S-adenosyl-L-methionine is bound by residues Ala-33–His-35, Asp-58, Phe-85, Asp-111, and Gln-118.

It belongs to the methyltransferase superfamily. RsmH family.

Its subcellular location is the cytoplasm. The enzyme catalyses cytidine(1402) in 16S rRNA + S-adenosyl-L-methionine = N(4)-methylcytidine(1402) in 16S rRNA + S-adenosyl-L-homocysteine + H(+). Functionally, specifically methylates the N4 position of cytidine in position 1402 (C1402) of 16S rRNA. In Chloroherpeton thalassium (strain ATCC 35110 / GB-78), this protein is Ribosomal RNA small subunit methyltransferase H.